A 715-amino-acid chain; its full sequence is Palmitoyltransferase ZDHHC5 (715 aa).

Residues Met1–Lys13 lie on the Cytoplasmic side of the membrane. A helical membrane pass occupies residues Tyr14–Phe34. The Extracellular portion of the chain corresponds to Thr35 to Gly38. Residues Leu39–Leu59 traverse the membrane as a helical segment. The Cytoplasmic segment spans residues Ala60–Tyr148. A Phosphotyrosine modification is found at Tyr91. One can recognise a DHHC domain in the interval Lys104 to Leu154. Catalysis depends on Cys134, which acts as the S-palmitoyl cysteine intermediate. A helical membrane pass occupies residues Phe149–Leu169. Over Tyr170 to Cys191 the chain is Extracellular. Residues Val192 to Ala212 traverse the membrane as a helical segment. At Arg213–Val715 the chain is on the cytoplasmic side. Phosphoserine is present on residues Ser247, Ser296, and Ser299. The interval Gly289–Glu648 is disordered. Thr303 is modified (phosphothreonine). Ser345 carries the post-translational modification Phosphoserine. A phosphothreonine mark is found at Thr348 and Thr350. The span at Ser359–Ala373 shows a compositional bias: low complexity. Residues Ser380, Ser398, Ser406, and Ser409 each carry the phosphoserine modification. Phosphothreonine is present on Thr411. A phosphoserine mark is found at Ser415, Ser425, Ser429, and Ser432. Positions Ser422 to Ser432 are enriched in low complexity. Thr436 carries the phosphothreonine modification. Residues Gln442–Asp478 show a composition bias toward polar residues. Phosphoserine occurs at positions 529 and 554. Arg617 carries the omega-N-methylarginine modification. Position 621 is a phosphoserine (Ser621). Thr659 is modified (phosphothreonine). The segment at Leu666–Val715 is disordered. The span at Thr668–Ser679 shows a compositional bias: polar residues. The segment covering Gly681 to Pro695 has biased composition (low complexity). 2 positions are modified to phosphoserine: Ser684 and Ser694. Position 697 is an omega-N-methylarginine (Arg697).

This sequence belongs to the DHHC palmitoyltransferase family. ERF2/ZDHHC9 subfamily. Post-translationally, phosphorylation regulates association with endocytic proteins and its subcellular localization. Phosphorylation by LYN during fatty acid uptake leads to inactivation of the activity. Autopalmitoylated. Palmitoylation of the C-terminal tail regulates stimulation-dependent plasma membrane motility.

It is found in the cell membrane. It carries out the reaction L-cysteinyl-[protein] + hexadecanoyl-CoA = S-hexadecanoyl-L-cysteinyl-[protein] + CoA. In terms of biological role, palmitoyltransferase that catalyzes the addition of palmitate onto various protein substrates such as CTNND2, CD36, GSDMD, NLRP3, NOD1, NOD2, STAT3 and S1PR1 thus plays a role in various biological processes including cell adhesion, inflammation, fatty acid uptake, bacterial sensing or cardiac functions. Plays an important role in the regulation of synapse efficacy by mediating palmitoylation of delta-catenin/CTNND2, thereby increasing synaptic delivery and surface stabilization of alpha-amino-3-hydroxy-5-methyl-4-isoxazole propionic acid receptors (AMPARs). Under basal conditions, remains at the synaptic membrane through FYN-mediated phosphorylation that prevents association with endocytic proteins. Neuronal activity enhances the internalization and trafficking of DHHC5 from spines to dendritic shafts where it palmitoylates delta-catenin/CTNND2. Regulates cell adhesion at the plasma membrane by palmitoylating GOLGA7B and DSG2. Plays a role in innate immune response by mediating the palmitoylation of NOD1 and NOD2 and their proper recruitment to the bacterial entry site and phagosomes. Also participates in fatty acid uptake by palmitoylating CD36 and thereby targeting it to the plasma membrane. Upon binding of fatty acids to CD36, gets phosphorylated by LYN leading to inactivation and subsequent CD36 caveolar endocytosis. Controls oligodendrocyte development by catalyzing STAT3 palmitoylation. Acts as a regulator of inflammatory response by mediating palmitoylation of NLRP3 and GSDMD. Palmitoylates NLRP3 to promote inflammasome assembly and activation. Activates pyroptosis by catalyzing palmitoylation of gasdermin-D (GSDMD), thereby promoting membrane translocation and pore formation of GSDMD. In Canis lupus familiaris (Dog), this protein is Palmitoyltransferase ZDHHC5 (ZDHHC5).